Reading from the N-terminus, the 465-residue chain is uncharacterized protein (465 aa).

The 86-residue stretch at Asn6–Arg91 folds into the RAMA domain. Disordered stretches follow at residues Thr95–Gln377 and Tyr392–Ser465. Low complexity predominate over residues Pro117–Pro137. Positions Glu156 to Ala169 are enriched in acidic residues. A compositionally biased stretch (low complexity) spans Thr177 to Thr190. The span at Pro208–Leu220 shows a compositional bias: basic and acidic residues. Positions Glu214–Ser242 form a coiled coil. A compositionally biased stretch (low complexity) spans Gln226–Ser263. Positions Asn264–Tyr294 are enriched in polar residues. A compositionally biased stretch (low complexity) spans Asn295–Asn376. A compositionally biased stretch (polar residues) spans Tyr392–Leu407. The span at Asn424–Lys442 shows a compositional bias: low complexity. Residues Ser443–Ser465 are compositionally biased toward basic residues.

This is an uncharacterized protein from Dictyostelium discoideum (Social amoeba).